The sequence spans 91 residues: Ragulator complex protein LAMTOR5 homolog (91 aa).

It belongs to the LAMTOR5 family. As to quaternary structure, part of the Ragulator complex.

Its subcellular location is the cytoplasm. The protein resides in the lysosome. In terms of biological role, regulator of the TOR pathway, a signaling cascade that promotes cell growth in response to growth factors, energy levels, and amino acids. As part of the Ragulator complex, may activate the TOR signaling cascade in response to amino acids. In Ixodes scapularis (Black-legged tick), this protein is Ragulator complex protein LAMTOR5 homolog.